The primary structure comprises 246 residues: tRNA pseudouridine synthase A (246 aa).

Catalysis depends on Asp52, which acts as the Nucleophile. Position 111 (Tyr111) interacts with substrate.

Belongs to the tRNA pseudouridine synthase TruA family. Homodimer.

The enzyme catalyses uridine(38/39/40) in tRNA = pseudouridine(38/39/40) in tRNA. Its function is as follows. Formation of pseudouridine at positions 38, 39 and 40 in the anticodon stem and loop of transfer RNAs. The chain is tRNA pseudouridine synthase A from Borreliella afzelii (strain PKo) (Borrelia afzelii).